The sequence spans 525 residues: Ribonuclease Y (525 aa).

A helical transmembrane segment spans residues 3 to 23 (IFFISLVLIVLASVVFFVGGF). Residues 215-300 (ALSVVHIQSD…KAYEDAKKEI (86 aa)) enclose the KH domain. Residues 341 to 433 (LLQHSREVAM…VDAANVISLS (93 aa)) form the HD domain.

This sequence belongs to the RNase Y family.

It is found in the cell membrane. Endoribonuclease that initiates mRNA decay. This is Ribonuclease Y from Chlorobium phaeobacteroides (strain DSM 266 / SMG 266 / 2430).